Reading from the N-terminus, the 292-residue chain is Putative sugar lactone lactonase YvrE (292 aa).

E15, N146, and D196 together coordinate a divalent metal cation.

It belongs to the SMP-30/CGR1 family. Requires a divalent metal cation as cofactor.

It is found in the cytoplasm. In Bacillus subtilis (strain 168), this protein is Putative sugar lactone lactonase YvrE (yvrE).